We begin with the raw amino-acid sequence, 420 residues long: MVEKRVQPLARDAMAYVLAGGRGSRLKELTDRRAKPAVYFGGKARIIDFALSNALNSGIRRIGVATQYKAHSLIRHMQRGWNFFRPERNESFDILPASQRVSETQWYEGTADAVYQNIDIIQDYGVEYMVILAGDHVYKMDYEWMLQQHVDSGADVTIGCLEVPRMEAVGFGVMHVNDKDEIIAFVEKPADPPPIPDKPDFALASMGIYVFHTKFLLDALRRDAADPNSSRDFGKDIIPYIVKNGKAVAHRFAKSCVRSDFEHEPYWRDVGTIDAYWQANIDLTAIVPELDIYDKSWPIWTYAEITPPAKFVHDDEDRRGSATSSVVSGDCIISGAMLNNSLLFTGVRANSFSKMEGAVILPNVKIGRRAQLKNVVIDHGVVIPEGLVVGEDAELDAKRFRRTESGICLITQPMIDKLDI.

Alpha-D-glucose 1-phosphate is bound by residues Tyr-107, Gly-172, 187 to 188 (EK), and Ser-205.

The protein belongs to the bacterial/plant glucose-1-phosphate adenylyltransferase family. In terms of assembly, homotetramer.

The catalysed reaction is alpha-D-glucose 1-phosphate + ATP + H(+) = ADP-alpha-D-glucose + diphosphate. Its pathway is glycan biosynthesis; glycogen biosynthesis. In terms of biological role, involved in the biosynthesis of ADP-glucose, a building block required for the elongation reactions to produce glycogen. Catalyzes the reaction between ATP and alpha-D-glucose 1-phosphate (G1P) to produce pyrophosphate and ADP-Glc. In Rhizobium johnstonii (strain DSM 114642 / LMG 32736 / 3841) (Rhizobium leguminosarum bv. viciae), this protein is Glucose-1-phosphate adenylyltransferase.